A 100-amino-acid polypeptide reads, in one-letter code: Aspartyl/glutamyl-tRNA(Asn/Gln) amidotransferase subunit C (100 aa).

Belongs to the GatC family. As to quaternary structure, heterotrimer of A, B and C subunits.

It carries out the reaction L-glutamyl-tRNA(Gln) + L-glutamine + ATP + H2O = L-glutaminyl-tRNA(Gln) + L-glutamate + ADP + phosphate + H(+). It catalyses the reaction L-aspartyl-tRNA(Asn) + L-glutamine + ATP + H2O = L-asparaginyl-tRNA(Asn) + L-glutamate + ADP + phosphate + 2 H(+). Allows the formation of correctly charged Asn-tRNA(Asn) or Gln-tRNA(Gln) through the transamidation of misacylated Asp-tRNA(Asn) or Glu-tRNA(Gln) in organisms which lack either or both of asparaginyl-tRNA or glutaminyl-tRNA synthetases. The reaction takes place in the presence of glutamine and ATP through an activated phospho-Asp-tRNA(Asn) or phospho-Glu-tRNA(Gln). In Streptococcus gordonii (strain Challis / ATCC 35105 / BCRC 15272 / CH1 / DL1 / V288), this protein is Aspartyl/glutamyl-tRNA(Asn/Gln) amidotransferase subunit C.